The sequence spans 58 residues: Metallothionein (58 aa).

The interval 1 to 29 is beta; that stretch reads MPDPCCIDKCECKEGGCKAGCKCTSCRCT. The a divalent metal cation site is built by C5, C6, C10, C12, C17, C21, C23, C26, C28, C31, C34, C38, C40, C46, C50, C54, C56, and C57. Residues 30–58 are alpha; the sequence is PCEKCSSGCKCTTKEDCCKTCTKPCSCCP.

Belongs to the metallothionein superfamily. Type 3 family.

Its function is as follows. Metallothioneins have a high content of cysteine residues that bind various heavy metals. Class I MTS in marine crustacea are involved in the sequestration of elevated levels of heavy-metal ions. This chain is Metallothionein, found in Carcinus maenas (Common shore crab).